The following is a 475-amino-acid chain: Histidine--tRNA ligase (475 aa).

This sequence belongs to the class-II aminoacyl-tRNA synthetase family. Homodimer.

The protein localises to the cytoplasm. The catalysed reaction is tRNA(His) + L-histidine + ATP = L-histidyl-tRNA(His) + AMP + diphosphate + H(+). The sequence is that of Histidine--tRNA ligase from Flavobacterium johnsoniae (strain ATCC 17061 / DSM 2064 / JCM 8514 / BCRC 14874 / CCUG 350202 / NBRC 14942 / NCIMB 11054 / UW101) (Cytophaga johnsonae).